A 307-amino-acid polypeptide reads, in one-letter code: MNYLITIIGPTAIGKTSLSIALAKQYNCDIISCDSRQFFKEMRIGTAVPSDEELSQATHHFIQNKSIFEEYTVGDFEKEAITKLDELFSKNNIQIMVGGSGLYADAVLKGFDSFPNIKPEIREKIQEQYDENGIQYLQQKLQELDTEYYSKILSQNPQTLQNPQRMMRFVEVCLGTGKPYSSFLNKDKITRNFTTIIIGLEADREIMYDRINQRVDIMINEGLLAEAEKLYPNKDLNALQTVGYRELFSFFDADFTLNFAIEEIKKNTRRFSKRQITWFKRTENTIWFDYKADTSKIIEVINTKMKH.

9-16 (GPTAIGKT) contacts ATP. Position 11–16 (11–16 (TAIGKT)) interacts with substrate. 2 interaction with substrate tRNA regions span residues 34-37 (DSRQ) and 164-168 (QRMMR).

This sequence belongs to the IPP transferase family. In terms of assembly, monomer. It depends on Mg(2+) as a cofactor.

The enzyme catalyses adenosine(37) in tRNA + dimethylallyl diphosphate = N(6)-dimethylallyladenosine(37) in tRNA + diphosphate. Functionally, catalyzes the transfer of a dimethylallyl group onto the adenine at position 37 in tRNAs that read codons beginning with uridine, leading to the formation of N6-(dimethylallyl)adenosine (i(6)A). The protein is tRNA dimethylallyltransferase of Flavobacterium psychrophilum (strain ATCC 49511 / DSM 21280 / CIP 103535 / JIP02/86).